The following is a 122-amino-acid chain: LOB domain-containing protein 5 (122 aa).

The LOB domain maps to 8 to 109 (RPCSVCITKN…AYLRELQEKI (102 aa)).

This sequence belongs to the LOB domain-containing protein family.

The polypeptide is LOB domain-containing protein 5 (LBD5) (Arabidopsis thaliana (Mouse-ear cress)).